A 66-amino-acid chain; its full sequence is UPF0457 protein BA_2525/GBAA_2525/BAS2348 (66 aa).

Belongs to the UPF0457 family.

The protein is UPF0457 protein BA_2525/GBAA_2525/BAS2348 of Bacillus anthracis.